The primary structure comprises 180 residues: Large ribosomal subunit protein uL5 (180 aa).

The protein belongs to the universal ribosomal protein uL5 family. As to quaternary structure, part of the 50S ribosomal subunit; part of the 5S rRNA/L5/L18/L25 subcomplex. Contacts the 5S rRNA and the P site tRNA. Forms a bridge to the 30S subunit in the 70S ribosome.

This is one of the proteins that bind and probably mediate the attachment of the 5S RNA into the large ribosomal subunit, where it forms part of the central protuberance. In the 70S ribosome it contacts protein S13 of the 30S subunit (bridge B1b), connecting the 2 subunits; this bridge is implicated in subunit movement. Contacts the P site tRNA; the 5S rRNA and some of its associated proteins might help stabilize positioning of ribosome-bound tRNAs. The chain is Large ribosomal subunit protein uL5 from Lactobacillus acidophilus (strain ATCC 700396 / NCK56 / N2 / NCFM).